Consider the following 107-residue polypeptide: Thioredoxin (107 aa).

One can recognise a Thioredoxin domain in the interval 2–107 (VVHIENLNAF…TLKQKINDHK (106 aa)). Active-site nucleophile residues include C32 and C35. A disulfide bond links C32 and C35. An S-nitrosocysteine mark is found at C71 and C75.

This sequence belongs to the thioredoxin family. Post-translationally, may be nitrosylated on several cysteine residues, depending on the oxidation state. Nitrosylated Cys-75 may serve as donor for nitrosylation of target proteins.

The protein resides in the nucleus. Its subcellular location is the cytoplasm. The protein localises to the secreted. Functionally, participates in various redox reactions through the reversible oxidation of its active center dithiol to a disulfide and catalyzes dithiol-disulfide exchange reactions. Plays a role in the reversible S-nitrosylation of cysteine residues in target proteins, and thereby contributes to the response to intracellular nitric oxide. Nitrosylates the active site Cys of CASP3 in response to nitric oxide (NO), and thereby inhibits caspase-3 activity. Induces the FOS/JUN AP-1 DNA binding activity in ionizing radiation (IR) cells through its oxidation/reduction status and stimulates AP-1 transcriptional activity. The sequence is that of Thioredoxin (txn) from Ictalurus punctatus (Channel catfish).